The sequence spans 77 residues: MNLKPQTLMVAIQCVAARTRELDAQLQNDDPQNAAELEQLLVGYDLAADDLKNAYEQALGQYSGLPPYDRLIEEPAS.

In terms of assembly, forms a heterotetramer with Tse2 consisting of two Tse2 dimers and two Tsi2 dimers. Formation of the complex inactivates Tse2 enzymatic activity.

In terms of biological role, immunity protein that plays a role in preventing early activation of toxin Tse2. Binds to a large surface of Tse2 and thereby occludes the active site to specifically inhibits Tse2. The protein is Immune protein Tsi2 of Pseudomonas aeruginosa (strain ATCC 15692 / DSM 22644 / CIP 104116 / JCM 14847 / LMG 12228 / 1C / PRS 101 / PAO1).